The primary structure comprises 509 residues: Heat shock 70 kDa protein 14 (509 aa).

Belongs to the heat shock protein 70 family. Component of ribosome-associated complex (RAC), a heterodimer composed of Hsp70/DnaK-type chaperone HSPA14 and Hsp40/DnaJ-type chaperone DNAJC2.

Its subcellular location is the cytoplasm. The protein resides in the cytosol. Its function is as follows. Component of the ribosome-associated complex (RAC), a complex involved in folding or maintaining nascent polypeptides in a folding-competent state. In the RAC complex, binds to the nascent polypeptide chain, while DNAJC2 stimulates its ATPase activity. This is Heat shock 70 kDa protein 14 (HSPA14) from Macaca fascicularis (Crab-eating macaque).